Consider the following 313-residue polypeptide: Porphobilinogen deaminase (313 aa).

An S-(dipyrrolylmethanemethyl)cysteine modification is found at cysteine 249.

This sequence belongs to the HMBS family. Monomer. Dipyrromethane is required as a cofactor.

It catalyses the reaction 4 porphobilinogen + H2O = hydroxymethylbilane + 4 NH4(+). It functions in the pathway porphyrin-containing compound metabolism; protoporphyrin-IX biosynthesis; coproporphyrinogen-III from 5-aminolevulinate: step 2/4. Tetrapolymerization of the monopyrrole PBG into the hydroxymethylbilane pre-uroporphyrinogen in several discrete steps. This is Porphobilinogen deaminase from Paracoccus denitrificans (strain Pd 1222).